A 548-amino-acid polypeptide reads, in one-letter code: ETS domain-containing transcription factor ERF (548 aa).

Threonine 3 and threonine 7 each carry phosphothreonine. 2 positions are modified to phosphoserine: serine 20 and serine 24. Residues isoleucine 27–asparagine 107 constitute a DNA-binding region (ETS). Disordered regions lie at residues glutamine 130 to serine 169, glycine 184 to leucine 225, and serine 280 to serine 304. Residues serine 185 and serine 190 each carry the phosphoserine modification. A compositionally biased stretch (gly residues) spans serine 289–serine 301. At serine 327 the chain carries Phosphoserine. Residues proline 342–methionine 478 form a disordered region. Residues cysteine 348–proline 361 are compositionally biased toward pro residues. 2 stretches are compositionally biased toward low complexity: residues serine 362–serine 373 and lysine 394–glycine 403. Phosphoserine is present on residues serine 431 and serine 435. Over residues serine 431–glycine 451 the composition is skewed to acidic residues. A Phosphothreonine modification is found at threonine 441. Residue serine 444 is modified to Phosphoserine. Residues lysine 465, lysine 481, and lysine 512 each participate in a glycyl lysine isopeptide (Lys-Gly) (interchain with G-Cter in SUMO2) cross-link. The segment at cysteine 492–serine 548 is disordered. Phosphothreonine; by MAPK1 is present on threonine 526. Phosphoserine is present on residues serine 531, serine 532, and serine 548. Positions serine 532–leucine 541 are enriched in polar residues.

This sequence belongs to the ETS family. Post-translationally, phosphorylated by multiple kinases including MAPK1/ERK2 at THR-526. Phosphorylation regulates the activity of ERF. Highest levels in testis, ovary, pancreas, and heart.

The protein resides in the nucleus. Functionally, potent transcriptional repressor that binds to the H1 element of the Ets2 promoter. May regulate other genes involved in cellular proliferation. Required for extraembryonic ectoderm differentiation, ectoplacental cone cavity closure, and chorioallantoic attachment. May be important for regulating trophoblast stem cell differentiation. The protein is ETS domain-containing transcription factor ERF (ERF) of Homo sapiens (Human).